Consider the following 56-residue polypeptide: Sex-specific storage protein 1 (56 aa).

This sequence belongs to the hemocyanin family. As to expression, expressed in fat body and ovary.

The protein localises to the secreted. Its function is as follows. Larval storage protein (LSP) which may serve as a store of amino acids for synthesis of adult proteins. The biosynthesis, accumulation and sequestration of storage protein-1 takes place during metamorphosis and saves energy for the non-feeding pupal stage. May also be essential for egg formation. This Amsacta albistriga (Red hairy caterpillar) protein is Sex-specific storage protein 1.